Here is an 89-residue protein sequence, read N- to C-terminus: MSITAERRTALIGEYQTAATDTGSPEVQVALLSERITNLTEHLKTHAKDFHSRRGLLVMVGKRRGLLDYLKRKDQARYQTLIGRLGLRR.

Belongs to the universal ribosomal protein uS15 family. In terms of assembly, part of the 30S ribosomal subunit. Forms a bridge to the 50S subunit in the 70S ribosome, contacting the 23S rRNA.

Its function is as follows. One of the primary rRNA binding proteins, it binds directly to 16S rRNA where it helps nucleate assembly of the platform of the 30S subunit by binding and bridging several RNA helices of the 16S rRNA. Forms an intersubunit bridge (bridge B4) with the 23S rRNA of the 50S subunit in the ribosome. This Gluconacetobacter diazotrophicus (strain ATCC 49037 / DSM 5601 / CCUG 37298 / CIP 103539 / LMG 7603 / PAl5) protein is Small ribosomal subunit protein uS15.